The sequence spans 549 residues: T-complex protein 1 subunit theta (549 aa).

It belongs to the TCP-1 chaperonin family. Heterooligomeric complex of about 850 to 900 kDa that forms two stacked rings, 12 to 16 nm in diameter. Interacts with CCT3, KNAT1, STM and TTG1. Expressed in shoot meristems, root tip, vasculature and leaf epidermis.

Its subcellular location is the cytoplasm. Functionally, molecular chaperone; assists the folding of proteins upon ATP hydrolysis. Known to play a role, in vitro, in the folding of actin and tubulin. Contributes to stem cell maintenance through its impact on transcription factors trafficking through plasmodesmata. Probably involved in refolding translocated, partially unfolded proteins, including viral movement proteins. The chain is T-complex protein 1 subunit theta from Arabidopsis thaliana (Mouse-ear cress).